We begin with the raw amino-acid sequence, 232 residues long: MKIGIIGAMEQEVTILKEQLTDCETHHKAGCIFYTGNLNGADVVLLQSGIGKVAAAVGTAVLLEAFQPDAVLNTGSAGGFDSSLTLGDVVISTEVRYHDADVTAFGYEIGQMAQQPAAFISDEKLILTAEQALASMADMHAVRGLICTGDAFVCTPEKQAFIRDNFPTVIAVEMEAAAIAQACHQFNVPFVVVRAISDVADKESPMSFEEFLPLAAQSSSVMVAKMVEILNQ.

The Proton acceptor role is filled by Glu-12. Substrate-binding positions include Gly-78, Val-153, and 174–175; that span reads ME. Asp-198 (proton donor) is an active-site residue.

Belongs to the PNP/UDP phosphorylase family. MtnN subfamily.

The enzyme catalyses S-adenosyl-L-homocysteine + H2O = S-(5-deoxy-D-ribos-5-yl)-L-homocysteine + adenine. It carries out the reaction S-methyl-5'-thioadenosine + H2O = 5-(methylsulfanyl)-D-ribose + adenine. It catalyses the reaction 5'-deoxyadenosine + H2O = 5-deoxy-D-ribose + adenine. Its pathway is amino-acid biosynthesis; L-methionine biosynthesis via salvage pathway; S-methyl-5-thio-alpha-D-ribose 1-phosphate from S-methyl-5'-thioadenosine (hydrolase route): step 1/2. Catalyzes the irreversible cleavage of the glycosidic bond in both 5'-methylthioadenosine (MTA) and S-adenosylhomocysteine (SAH/AdoHcy) to adenine and the corresponding thioribose, 5'-methylthioribose and S-ribosylhomocysteine, respectively. Also cleaves 5'-deoxyadenosine, a toxic by-product of radical S-adenosylmethionine (SAM) enzymes, into 5-deoxyribose and adenine. In Photobacterium profundum (strain SS9), this protein is 5'-methylthioadenosine/S-adenosylhomocysteine nucleosidase.